The following is an 89-amino-acid chain: Small ribosomal subunit protein uS15 (89 aa).

It belongs to the universal ribosomal protein uS15 family. As to quaternary structure, part of the 30S ribosomal subunit. Forms a bridge to the 50S subunit in the 70S ribosome, contacting the 23S rRNA.

One of the primary rRNA binding proteins, it binds directly to 16S rRNA where it helps nucleate assembly of the platform of the 30S subunit by binding and bridging several RNA helices of the 16S rRNA. Functionally, forms an intersubunit bridge (bridge B4) with the 23S rRNA of the 50S subunit in the ribosome. This chain is Small ribosomal subunit protein uS15, found in Hyphomonas neptunium (strain ATCC 15444).